The chain runs to 340 residues: DNA-directed RNA polymerase subunit alpha (340 aa).

The tract at residues Met1–Asp233 is alpha N-terminal domain (alpha-NTD). Positions Asp246–Glu340 are alpha C-terminal domain (alpha-CTD).

This sequence belongs to the RNA polymerase alpha chain family. Homodimer. The RNAP catalytic core consists of 2 alpha, 1 beta, 1 beta' and 1 omega subunit. When a sigma factor is associated with the core the holoenzyme is formed, which can initiate transcription.

The catalysed reaction is RNA(n) + a ribonucleoside 5'-triphosphate = RNA(n+1) + diphosphate. Its function is as follows. DNA-dependent RNA polymerase catalyzes the transcription of DNA into RNA using the four ribonucleoside triphosphates as substrates. The polypeptide is DNA-directed RNA polymerase subunit alpha (Pelobacter propionicus (strain DSM 2379 / NBRC 103807 / OttBd1)).